The chain runs to 655 residues: Carboxypeptidase S1 homolog B (655 aa).

A signal peptide spans 1–21 (MRPFARAALCLLAAAGHLAQA). Cys51 and Cys123 form a disulfide bridge. Residues Asn130, Asn163, and Asn186 are each glycosylated (N-linked (GlcNAc...) asparagine). Ser240 is a catalytic residue. N-linked (GlcNAc...) asparagine glycosylation is found at Asn266, Asn302, and Asn311. 2 cysteine pairs are disulfide-bonded: Cys328–Cys364 and Cys335–Cys357. Asn414 is a glycosylation site (N-linked (GlcNAc...) asparagine). Residue Asp459 is part of the active site. Position 462 (Cys462) interacts with substrate. N-linked (GlcNAc...) asparagine glycans are attached at residues Asn475, Asn493, and Asn506. His517 is an active-site residue. Glu518 serves as a coordination point for substrate. 2 N-linked (GlcNAc...) asparagine glycosylation sites follow: Asn598 and Asn612. A lipid anchor (GPI-anchor amidated glycine) is attached at Gly631. Residues 632 to 655 (AALVSGRIKFHVHVIKSFDYYIFI) constitute a propeptide, removed in mature form.

The protein belongs to the peptidase S10 family.

It localises to the cell membrane. The enzyme catalyses Preferential release of a C-terminal arginine or lysine residue.. Its function is as follows. Extracellular serine carboxypeptidase that contributes to pathogenicity. The polypeptide is Carboxypeptidase S1 homolog B (SCPB) (Arthroderma otae (strain ATCC MYA-4605 / CBS 113480) (Microsporum canis)).